We begin with the raw amino-acid sequence, 378 residues long: Alcohol dehydrogenase 1 (378 aa).

Cys-48 serves as a coordination point for Zn(2+). An NAD(+)-binding site is contributed by 49-53; it reads HTDVL. His-69, Cys-99, Cys-102, Cys-105, Cys-113, and Cys-177 together coordinate Zn(2+). NAD(+) contacts are provided by residues 202–207, Asp-226, Lys-231, 274–276, 297–299, and 321–323; these read GIGTVG, TGV, IGA, and TAF.

Belongs to the zinc-containing alcohol dehydrogenase family. Class-IV subfamily. In terms of assembly, homodimer. It depends on Zn(2+) as a cofactor. As to expression, present in non-glandular trichome cells.

Its subcellular location is the nucleus. It is found in the cytoplasm. It localises to the cytosol. The enzyme catalyses (+)-artemisinic alcohol + NAD(+) = (+)-artemisinic aldehyde + NADH + H(+). It functions in the pathway sesquiterpene biosynthesis. In terms of biological role, involved in the biosynthesis of the antimalarial endoperoxide artemisinin. Catalyzes the conversion of artemisinic alcohol into artemisinic aldehyde. The sequence is that of Alcohol dehydrogenase 1 from Artemisia annua (Sweet wormwood).